The chain runs to 209 residues: Ion-translocating oxidoreductase complex subunit G (209 aa).

A helical membrane pass occupies residues 9-29 (GLILAVFACVSTGLVALTYAL). At T175 the chain carries FMN phosphoryl threonine.

This sequence belongs to the RnfG family. As to quaternary structure, the complex is composed of six subunits: RnfA, RnfB, RnfC, RnfD, RnfE and RnfG. The cofactor is FMN.

Its subcellular location is the cell inner membrane. Its function is as follows. Part of a membrane-bound complex that couples electron transfer with translocation of ions across the membrane. The polypeptide is Ion-translocating oxidoreductase complex subunit G (Vibrio cholerae serotype O1 (strain ATCC 39315 / El Tor Inaba N16961)).